The following is a 151-amino-acid chain: Putative pre-16S rRNA nuclease (151 aa).

This sequence belongs to the YqgF nuclease family.

Its subcellular location is the cytoplasm. Its function is as follows. Could be a nuclease involved in processing of the 5'-end of pre-16S rRNA. The protein is Putative pre-16S rRNA nuclease of Bifidobacterium adolescentis (strain ATCC 15703 / DSM 20083 / NCTC 11814 / E194a).